Reading from the N-terminus, the 484-residue chain is Siroheme synthase 1 (484 aa).

Positions 1 to 205 (MHHYPIFLKL…GREAEGEAEL (205 aa)) are precorrin-2 dehydrogenase /sirohydrochlorin ferrochelatase. NAD(+) is bound by residues 22 to 23 (EA) and 43 to 44 (PV). A Phosphoserine modification is found at S130. The segment at 220–484 (GEVFLVGAGP…DPCWTGGMRD (265 aa)) is uroporphyrinogen-III C-methyltransferase. S-adenosyl-L-methionine is bound at residue P229. D252 acts as the Proton acceptor in catalysis. Catalysis depends on K274, which acts as the Proton donor. Residues 305 to 307 (GGD), L310, 335 to 336 (SA), M387, and A416 contribute to the S-adenosyl-L-methionine site.

It in the N-terminal section; belongs to the precorrin-2 dehydrogenase / sirohydrochlorin ferrochelatase family. This sequence in the C-terminal section; belongs to the precorrin methyltransferase family.

The catalysed reaction is uroporphyrinogen III + 2 S-adenosyl-L-methionine = precorrin-2 + 2 S-adenosyl-L-homocysteine + H(+). The enzyme catalyses precorrin-2 + NAD(+) = sirohydrochlorin + NADH + 2 H(+). It catalyses the reaction siroheme + 2 H(+) = sirohydrochlorin + Fe(2+). It functions in the pathway cofactor biosynthesis; adenosylcobalamin biosynthesis; precorrin-2 from uroporphyrinogen III: step 1/1. Its pathway is cofactor biosynthesis; adenosylcobalamin biosynthesis; sirohydrochlorin from precorrin-2: step 1/1. It participates in porphyrin-containing compound metabolism; siroheme biosynthesis; precorrin-2 from uroporphyrinogen III: step 1/1. The protein operates within porphyrin-containing compound metabolism; siroheme biosynthesis; siroheme from sirohydrochlorin: step 1/1. It functions in the pathway porphyrin-containing compound metabolism; siroheme biosynthesis; sirohydrochlorin from precorrin-2: step 1/1. Multifunctional enzyme that catalyzes the SAM-dependent methylations of uroporphyrinogen III at position C-2 and C-7 to form precorrin-2 via precorrin-1. Then it catalyzes the NAD-dependent ring dehydrogenation of precorrin-2 to yield sirohydrochlorin. Finally, it catalyzes the ferrochelation of sirohydrochlorin to yield siroheme. The polypeptide is Siroheme synthase 1 (Halorhodospira halophila (strain DSM 244 / SL1) (Ectothiorhodospira halophila (strain DSM 244 / SL1))).